The primary structure comprises 82 residues: Cytotoxin 10 (82 aa).

Residues 1–22 form the signal peptide; it reads MKTLLLTLVVVVTIVCLDLGYT. 4 disulfides stabilise this stretch: C25–C43, C36–C60, C64–C75, and C76–C81.

It belongs to the three-finger toxin family. Short-chain subfamily. Type IA cytotoxin sub-subfamily. As to quaternary structure, monomer in solution; Homodimer and oligomer in the presence of negatively charged lipids forming a pore with a size ranging between 20 and 30 Angstroms. Expressed by the venom gland.

The protein resides in the secreted. Its subcellular location is the target cell membrane. Functionally, shows cytolytic activity on many different cells by forming pore in lipid membranes. In vivo, increases heart rate or kills the animal by cardiac arrest. In addition, it binds to heparin with high affinity, interacts with Kv channel-interacting protein 1 (KCNIP1) in a calcium-independent manner, and binds to integrin alpha-V/beta-3 (ITGAV/ITGB3) with moderate affinity. The polypeptide is Cytotoxin 10 (Naja atra (Chinese cobra)).